The sequence spans 341 residues: Phenazine O-methyltransferase PhzM (341 aa).

Residues aspartate 205 and 231–233 each bind S-adenosyl-L-methionine; that span reads GDF. The active-site Proton acceptor is histidine 251.

The protein belongs to the class I-like SAM-binding methyltransferase superfamily. Cation-independent O-methyltransferase family. Homodimer.

It carries out the reaction 1,6-dihydroxyphenazine + S-adenosyl-L-methionine = 1-hydroxy-6-methoxyphenazine + S-adenosyl-L-homocysteine + H(+). The catalysed reaction is 1-hydroxy-6-methoxyphenazine + S-adenosyl-L-methionine = 1,6-dimethoxyphenazine + S-adenosyl-L-homocysteine + H(+). It catalyses the reaction 1-hydroxy-6-methoxyphenazine N(10)-oxide + S-adenosyl-L-methionine = 1,6-dimethoxyphenazine N(5)-oxide + S-adenosyl-L-homocysteine. The enzyme catalyses 1,6-dihydroxyphenazine N(5),N(10)-dioxide + S-adenosyl-L-methionine = 1-hydroxy-6-methoxyphenazine N(5),N(10)-dioxide + S-adenosyl-L-homocysteine. It carries out the reaction 1-hydroxy-6-methoxyphenazine N(5),N(10)-dioxide + S-adenosyl-L-methionine = 1,6-dimethoxyphenazine N(5),N(10)-dioxide + S-adenosyl-L-homocysteine. Involved in the biosynthesis of phenazine natural products including myxin, an N(5),N(10)-dioxide phenazine antiobiotic, which has antimicrobial activity. O-methyltransferase, which converts iodinin (1,6-dihydroxyphenazine N(5),N(10)-dioxide) to myxin (1-hydroxy-6-methoxyphenazine N(5),N(10)-dioxide). Catalyzes both monomethoxy and dimethoxy formation of phenazine natural compounds. Acts on a wide variety of substrates, catalyzing O-methylation of phenazines with non-, mono- or di-N-oxide. Highest activity with 1,6-dihydroxyphenazine (DHP) as substrate. Less active with monohydroxy-containing and monohydroxy-monomethoxy-containing phenazines. Least active with non-phenazine substrates, such as 8-hydroxyquinoline and 6-hydroxyquinoline. Is not able to convert 1-hydroxyphenazine to 1-hydroxy-N5-methylphenazine (pyocyanine), hence does not function as an N-methyltransferase. This Lysobacter antibioticus protein is Phenazine O-methyltransferase PhzM.